The chain runs to 333 residues: Ketol-acid reductoisomerase (NADP(+)) (333 aa).

The KARI N-terminal Rossmann domain occupies 2-182; it reads ANIYYDDSCD…GGGRAGILET (181 aa). Residues 25-28, Arg-48, Ser-51, Ser-53, and 83-86 contribute to the NADP(+) site; these read YGSQ and DTIQ. His-108 is a catalytic residue. Gly-134 contacts NADP(+). Positions 183 to 331 constitute a KARI C-terminal knotted domain; it reads SFREETETDL…TKLRSMMKWL (149 aa). Mg(2+) contacts are provided by Asp-191, Glu-195, Glu-227, and Glu-231. Ser-252 is a substrate binding site.

This sequence belongs to the ketol-acid reductoisomerase family. The cofactor is Mg(2+).

The catalysed reaction is (2R)-2,3-dihydroxy-3-methylbutanoate + NADP(+) = (2S)-2-acetolactate + NADPH + H(+). The enzyme catalyses (2R,3R)-2,3-dihydroxy-3-methylpentanoate + NADP(+) = (S)-2-ethyl-2-hydroxy-3-oxobutanoate + NADPH + H(+). It participates in amino-acid biosynthesis; L-isoleucine biosynthesis; L-isoleucine from 2-oxobutanoate: step 2/4. It functions in the pathway amino-acid biosynthesis; L-valine biosynthesis; L-valine from pyruvate: step 2/4. In terms of biological role, involved in the biosynthesis of branched-chain amino acids (BCAA). Catalyzes an alkyl-migration followed by a ketol-acid reduction of (S)-2-acetolactate (S2AL) to yield (R)-2,3-dihydroxy-isovalerate. In the isomerase reaction, S2AL is rearranged via a Mg-dependent methyl migration to produce 3-hydroxy-3-methyl-2-ketobutyrate (HMKB). In the reductase reaction, this 2-ketoacid undergoes a metal-dependent reduction by NADPH to yield (R)-2,3-dihydroxy-isovalerate. This is Ketol-acid reductoisomerase (NADP(+)) from Leptospira biflexa serovar Patoc (strain Patoc 1 / Ames).